The primary structure comprises 416 residues: UDP-N-acetylmuramoylalanine--D-glutamate ligase (416 aa).

G104–T110 contacts ATP.

The protein belongs to the MurCDEF family.

It localises to the cytoplasm. It carries out the reaction UDP-N-acetyl-alpha-D-muramoyl-L-alanine + D-glutamate + ATP = UDP-N-acetyl-alpha-D-muramoyl-L-alanyl-D-glutamate + ADP + phosphate + H(+). It functions in the pathway cell wall biogenesis; peptidoglycan biosynthesis. Its function is as follows. Cell wall formation. Catalyzes the addition of glutamate to the nucleotide precursor UDP-N-acetylmuramoyl-L-alanine (UMA). This chain is UDP-N-acetylmuramoylalanine--D-glutamate ligase, found in Francisella tularensis subsp. tularensis (strain WY96-3418).